The chain runs to 218 residues: Redox-sensing transcriptional repressor Rex (218 aa).

The H-T-H motif DNA-binding region spans 18-57 (LYYRFIQSLHASGKQRVSSAELSEAVKVDSATIRRDFSYF). NAD(+) is bound at residue 92-97 (GVGHLG).

Belongs to the transcriptional regulatory Rex family. In terms of assembly, homodimer.

Its subcellular location is the cytoplasm. Functionally, modulates transcription in response to changes in cellular NADH/NAD(+) redox state. The protein is Redox-sensing transcriptional repressor Rex of Exiguobacterium sp. (strain ATCC BAA-1283 / AT1b).